Consider the following 145-residue polypeptide: MGSGSSRSGRIPRRRRSPDRRQTGPGETASEGGTADQAPTAAGQEESGRDPRPATPSGGREETLRLLDQLLAESEAWGPQELTPRGPARLAPAVSPEKKVKGNPEDSCASEAPGNSPKRPEGQSAISYDYSEEELMASIEREYCR.

The interval 1–129 is disordered; it reads MGSGSSRSGR…PEGQSAISYD (129 aa). The N-myristoyl glycine moiety is linked to residue G2. The short motif at 29–33 is the Ciliary targeting motif element; sequence ASEGG. S116 carries the phosphoserine modification.

Interacts (when myristoylated) with UNC119 and UNC119B; interaction is required for localization to cilium. In terms of tissue distribution, expressed primarily in the kidney and liver. Expressed at lower levels in the lung, brain and heart.

The protein resides in the cell projection. It is found in the cilium membrane. Its subcellular location is the cytoplasm. It localises to the cytoskeleton. The protein localises to the cilium axoneme. In Mus musculus (Mouse), this protein is Cystin-1 (Cys1).